A 301-amino-acid chain; its full sequence is Multifunctional dioxygenase prhA (301 aa).

Positions 130, 132, and 214 each coordinate Fe cation.

Belongs to the PhyH family. As to quaternary structure, homodimer. It depends on Fe cation as a cofactor.

It catalyses the reaction preaustinoid A1 + 2-oxoglutarate + O2 = berkeleyone B + succinate + CO2 + H2O. It carries out the reaction berkeleyone B + 2-oxoglutarate + O2 = berkeleydione + succinate + CO2 + H2O. The catalysed reaction is preaustinoid A + 2 2-oxoglutarate + 2 O2 = berkeleytrione + 2 succinate + 2 CO2 + H2O. It participates in secondary metabolite biosynthesis; terpenoid biosynthesis. Functionally, multifunctional dioxygenase; part of the gene cluster that mediates the biosynthesis of paraherquonin, a meroterpenoid with a unique, highly congested hexacyclic molecular architecture. The first step of the pathway is the synthesis of 3,5-dimethylorsellinic acid (DMOA) by the polyketide synthase prhL. Synthesis of DMOA is followed by farnesylation by the prenyltransferase prhE, methylesterification by the methyl-transferase prhM, epoxidation of the prenyl chain by the flavin-dependent monooxygenase prhF, and cyclization of the farnesyl moiety by the terpene cyclase prhH, to yield the tetracyclic intermediate, protoaustinoid A. The short chain dehydrogenase prhI then oxidizes the C-3 alcohol group of the terpene cyclase product to transform protoaustinoid A into protoaustinoid B. The FAD-binding monooxygenase prhJ catalyzes the oxidation of protoaustinoid B into preaustinoid A which is further oxidized into preaustinoid A1 by FAD-binding monooxygenase phrK. Finally, prhA leads to berkeleydione via the berkeleyone B intermediate. PrhA is a multifunctional dioxygenase that first desaturates at C5-C6 to form berkeleyone B, followed by rearrangement of the A/B-ring to form the cycloheptadiene moiety in berkeleydione. Berkeleydione serves as the key intermediate for the biosynthesis of paraherquonin as well as many other meroterpenoids. The cytochrome P450 monooxygenases prhB, prhD, and prhN, as well as the isomerase prhC, are probably involved in the late stage of paraherquonin biosynthesis, after the production of berkeleydione. Especially prhC might be a multifunctional enzyme that catalyzes the D-ring expansion via intramolecular methoxy rearrangement, as well as the hydrolysis of the expanded D-ring. This Penicillium brasilianum protein is Multifunctional dioxygenase prhA.